A 310-amino-acid polypeptide reads, in one-letter code: MKCKFCSREAYIKIHYPKMYLCEEHFKEYFERKVSRTIERYKLLTKDERILVAVSGGKDSAVTAYVLKKLGYNIECLHINLGISGYSEKSEEYAKKQCKLIGAPLHIVRIKEILGYGIGEVKTRRPPCSYCGLTKRYIMNKFAYDNGFDAIATGHNLDDEASFLLNNILHWNTEYLAKGGPILPQQGKFIKKVKPLYEVTEREVVAYALAVGLEYIVEECPYARGATTLDMKGVLNELEEKRPGTKFNFVRGYLKKKKLFEPEIKEKEIKECKICRMPSSGDICAFCKFWGLKKEINFKVSSTDEEPFGP.

The Zn(2+) site is built by cysteine 3, cysteine 6, cysteine 22, and histidine 25. ATP is bound by residues alanine 53 and isoleucine 79. 2 residues coordinate [4Fe-4S] cluster: cysteine 128 and cysteine 131. A disulfide bridge connects residues cysteine 128 and cysteine 220. Positions 135 and 154 each coordinate ATP. Position 220 (cysteine 220) interacts with [4Fe-4S] cluster. 4 residues coordinate Zn(2+): cysteine 272, cysteine 275, cysteine 284, and cysteine 287.

It belongs to the TtcA family. TtuA subfamily. Homodimer. [4Fe-4S] cluster is required as a cofactor. Mg(2+) serves as cofactor.

The catalysed reaction is 5-methyluridine(54) in tRNA + hydrogen sulfide + ATP = 5-methyl-2-thiouridine(54) in tRNA + AMP + diphosphate. The protein operates within tRNA modification. Functionally, catalyzes the ATP-dependent 2-thiolation of 5-methyluridine residue at position 54 in the T loop of tRNAs, leading to 5-methyl-2-thiouridine (m(5)s(2)U or s(2)T). This modification allows thermal stabilization of tRNAs in thermophilic microorganisms, and is required for cell growth at high temperatures. Can use free sulfide as sulfur source in vitro, which may be also the sulfur source in vivo. The chain is tRNA-5-methyluridine(54) 2-sulfurtransferase from Pyrococcus horikoshii (strain ATCC 700860 / DSM 12428 / JCM 9974 / NBRC 100139 / OT-3).